Consider the following 370-residue polypeptide: Cysteine-type anaerobic sulfatase-maturating enzyme (370 aa).

A Radical SAM core domain is found at 1–227; sequence MPPLSLLIKP…LKNLFDLWYE (227 aa). 2 residues coordinate [4Fe-4S] cluster: Cys15 and Cys19. Residue Tyr21 participates in S-adenosyl-L-methionine binding. Cys22 is a [4Fe-4S] cluster binding site. S-adenosyl-L-methionine-binding residues include Gly66, Ser122, Arg134, and Leu195. [4Fe-4S] cluster is bound by residues Cys255, Cys261, and Cys276. Asp277 acts as the Proton acceptor in catalysis. [4Fe-4S] cluster-binding residues include Cys317, Cys320, Cys326, Cys330, and Cys348.

It belongs to the radical SAM superfamily. Anaerobic sulfatase-maturating enzyme family. [4Fe-4S] cluster serves as cofactor.

It carries out the reaction L-cysteinyl-[sulfatase] + S-adenosyl-L-methionine + H2O = 3-oxo-L-alanyl-[sulfatase] + hydrogen sulfide + 5'-deoxyadenosine + L-methionine + 2 H(+). Its pathway is protein modification; sulfatase oxidation. Functionally, involved in 'Cys-type' sulfatase maturation under anaerobic conditions. Catalyzes the post-translational modification of cysteine into 3-oxoalanine (also known as C(alpha)-formylglycine (FGly)), by a free radical chemical mechanism initiated via the reductive cleavage of S-adenosyl-L-methionine (SAM). In Clostridium perfringens (strain 13 / Type A), this protein is Cysteine-type anaerobic sulfatase-maturating enzyme.